The chain runs to 286 residues: Phycobilisome 32.1 kDa linker polypeptide, phycocyanin-associated, rod (286 aa).

A PBS-linker domain is found at 2–180 (AITAAASRLG…LYRGYANSDR (179 aa)). Residues 234–286 (DRVYRIEVTGVRSPGYPSVRRSSYAIIVPYERLSEKIQQIHKLGGKIVSITSA) form the CpcD-like domain.

Belongs to the phycobilisome linker protein family.

The protein localises to the cellular thylakoid membrane. Its function is as follows. Rod linker protein, associated with phycocyanin. Linker polypeptides determine the state of aggregation and the location of the disk-shaped phycobiliprotein units within the phycobilisome and modulate their spectroscopic properties in order to mediate a directed and optimal energy transfer. This chain is Phycobilisome 32.1 kDa linker polypeptide, phycocyanin-associated, rod (cpcC), found in Mastigocladus laminosus (Fischerella sp.).